The chain runs to 545 residues: Signal peptide peptidase-like 4 (545 aa).

Residues 1–25 (MGTSSPEMAAALLLVMAALAGVAAG) form the signal peptide. The Lumenal portion of the chain corresponds to 26 to 193 (GDIVHQDDEA…PDRPLVDTAE (168 aa)). N-linked (GlcNAc...) asparagine glycans are attached at residues Asn-81 and Asn-147. Residues 90–170 (PIDCCDPPTQ…PKDAGNDLQK (81 aa)) form the PA domain. Residues 194 to 214 (VFLWLMAVGTILCASYWSAWS) traverse the membrane as a helical segment. At 215 to 246 (AREAVIEQEKLLKDGHESSLNLEAGGSSGMVD) the chain is on the cytoplasmic side. A helical membrane pass occupies residues 247–267 (INMTSAILFVVIASCFLIMLY). Over 268 to 276 (KLMSHWFVE) the chain is Lumenal. The chain crosses the membrane as a helical span at residues 277 to 297 (LLVVIFCIGGVEGLQTCLVAL). Over 298 to 317 (LSRWFKPAAESFVKVPFFGA) the chain is Cytoplasmic. Residues 318–338 (VSYLTIAVCPFCIVFAVIWAV) form a helical membrane-spanning segment. Topologically, residues 339–343 (YRRMT) are lumenal. Residues 344 to 364 (YAWIGQDILGIALIVTVIQIV) traverse the membrane as a helical segment. The Cytoplasmic segment spans residues 365–373 (RIPNLKVGS). The chain crosses the membrane as a helical span at residues 374–394 (VLLSCSFLYDIFWVFISKMWF). Residue Asp-383 is part of the active site. Residues 395 to 427 (HESVMIVVARGDKTDEDGVPMLLKIPRMFDPWG) lie on the Lumenal side of the membrane. Residues 428 to 448 (GFSIIGFGDILLPGLLIAFAL) form a helical membrane-spanning segment. Asp-436 is a catalytic residue. At 449–460 (RYDWAAKKTLQS) the chain is on the cytoplasmic side. The chain crosses the membrane as a helical span at residues 461–481 (GYFLWSMVAYGSGLMITYVAL). The Lumenal segment spans residues 482-485 (NLMD). A helical membrane pass occupies residues 486–506 (GHGQPALLYIVPFTLGTFIAL). The short motif at 490 to 492 (PAL) is the PAL element. Over 507-545 (GRKRGELRNLWTRGQPERVCTHMHMQPSPKDTNCDAVSS) the chain is Cytoplasmic.

It belongs to the peptidase A22B family. Glycosylated.

The protein resides in the endosome membrane. Intramembrane-cleaving aspartic protease (I-CLiP) that cleaves type II membrane signal peptides in the hydrophobic plane of the membrane. The chain is Signal peptide peptidase-like 4 (SPPL4) from Oryza sativa subsp. japonica (Rice).